A 943-amino-acid polypeptide reads, in one-letter code: Isoleucine--tRNA ligase (943 aa).

The short motif at 59 to 69 (PYANGQIHLGH) is the 'HIGH' region element. Position 577 (E577) interacts with L-isoleucyl-5'-AMP. The 'KMSKS' region signature appears at 618–622 (KMSKS). K621 is an ATP binding site. Residues C906, C909, C926, and C929 each coordinate Zn(2+).

It belongs to the class-I aminoacyl-tRNA synthetase family. IleS type 1 subfamily. Monomer. Zn(2+) is required as a cofactor.

The protein localises to the cytoplasm. It catalyses the reaction tRNA(Ile) + L-isoleucine + ATP = L-isoleucyl-tRNA(Ile) + AMP + diphosphate. Catalyzes the attachment of isoleucine to tRNA(Ile). As IleRS can inadvertently accommodate and process structurally similar amino acids such as valine, to avoid such errors it has two additional distinct tRNA(Ile)-dependent editing activities. One activity is designated as 'pretransfer' editing and involves the hydrolysis of activated Val-AMP. The other activity is designated 'posttransfer' editing and involves deacylation of mischarged Val-tRNA(Ile). The polypeptide is Isoleucine--tRNA ligase (Xylella fastidiosa (strain M23)).